The sequence spans 268 residues: Hydroxyethylthiazole kinase (268 aa).

Met-45 contacts substrate. ATP is bound by residues Arg-121 and Thr-167. Substrate is bound at residue Gly-194.

The protein belongs to the Thz kinase family. It depends on Mg(2+) as a cofactor.

It catalyses the reaction 5-(2-hydroxyethyl)-4-methylthiazole + ATP = 4-methyl-5-(2-phosphooxyethyl)-thiazole + ADP + H(+). It participates in cofactor biosynthesis; thiamine diphosphate biosynthesis; 4-methyl-5-(2-phosphoethyl)-thiazole from 5-(2-hydroxyethyl)-4-methylthiazole: step 1/1. Catalyzes the phosphorylation of the hydroxyl group of 4-methyl-5-beta-hydroxyethylthiazole (THZ). The protein is Hydroxyethylthiazole kinase of Bacillus cereus (strain ATCC 10987 / NRS 248).